We begin with the raw amino-acid sequence, 327 residues long: GMP reductase (327 aa).

The active-site Thioimidate intermediate is C175. Residue 204 to 227 coordinates NADP(+); the sequence is IIADGGIRTHGDVAKSIRFGATMV.

Belongs to the IMPDH/GMPR family. GuaC type 2 subfamily.

It catalyses the reaction IMP + NH4(+) + NADP(+) = GMP + NADPH + 2 H(+). Catalyzes the irreversible NADPH-dependent deamination of GMP to IMP. It functions in the conversion of nucleobase, nucleoside and nucleotide derivatives of G to A nucleotides, and in maintaining the intracellular balance of A and G nucleotides. In Bacillus thuringiensis subsp. konkukian (strain 97-27), this protein is GMP reductase.